We begin with the raw amino-acid sequence, 359 residues long: Membrane-bound lytic murein transglycosylase C (359 aa).

The signal sequence occupies residues 1–16 (MKKYLALALIAPLLIS). Cysteine 17 is lipidated: N-palmitoyl cysteine. A lipid anchor (S-diacylglycerol cysteine) is attached at cysteine 17.

Belongs to the transglycosylase Slt family.

The protein localises to the cell outer membrane. The enzyme catalyses Exolytic cleavage of the (1-&gt;4)-beta-glycosidic linkage between N-acetylmuramic acid (MurNAc) and N-acetylglucosamine (GlcNAc) residues in peptidoglycan, from either the reducing or the non-reducing ends of the peptidoglycan chains, with concomitant formation of a 1,6-anhydrobond in the MurNAc residue.. Murein-degrading enzyme. May play a role in recycling of muropeptides during cell elongation and/or cell division. This Escherichia coli O8 (strain IAI1) protein is Membrane-bound lytic murein transglycosylase C.